The sequence spans 195 residues: N-terminal acetyltransferase B complex catalytic subunit NAT3 (195 aa).

Residues 2–172 (TTIQPFEPVD…DAFDMRKAMA (171 aa)) form the N-acetyltransferase domain.

This sequence belongs to the acetyltransferase family. GNAT subfamily. As to quaternary structure, component of the N-terminal acetyltransferase B (NatB) complex, which is composed of NAT3 and MDM20.

It localises to the cytoplasm. The enzyme catalyses N-terminal L-methionyl-L-asparaginyl-[protein] + acetyl-CoA = N-terminal N(alpha)-acetyl-L-methionyl-L-asparaginyl-[protein] + CoA + H(+). It catalyses the reaction N-terminal L-methionyl-L-glutaminyl-[protein] + acetyl-CoA = N-terminal N(alpha)-acetyl-L-methionyl-L-glutaminyl-[protein] + CoA + H(+). It carries out the reaction N-terminal L-methionyl-L-aspartyl-[protein] + acetyl-CoA = N-terminal N(alpha)-acetyl-L-methionyl-L-aspartyl-[protein] + CoA + H(+). The catalysed reaction is N-terminal L-methionyl-L-glutamyl-[protein] + acetyl-CoA = N-terminal N(alpha)-acetyl-L-methionyl-L-glutamyl-[protein] + CoA + H(+). Functionally, catalytic subunit of the NatB N-terminal acetyltransferase, which catalyzes acetylation of the amino-terminal methionine residues of all proteins beginning with Met-Asp or Met-Glu and of some proteins beginning with Met-Asn, Met-Gln or Met-Met. NatB acetylates TPM1 protein and regulates tropomyocin-actin interactions, it is presumed to N-acetylate 15% of all yeast proteins. This is N-terminal acetyltransferase B complex catalytic subunit NAT3 from Saccharomyces cerevisiae (strain ATCC 204508 / S288c) (Baker's yeast).